We begin with the raw amino-acid sequence, 133 residues long: Ribosome-binding factor A (133 aa).

The protein belongs to the RbfA family. In terms of assembly, monomer. Binds 30S ribosomal subunits, but not 50S ribosomal subunits or 70S ribosomes.

Its subcellular location is the cytoplasm. One of several proteins that assist in the late maturation steps of the functional core of the 30S ribosomal subunit. Associates with free 30S ribosomal subunits (but not with 30S subunits that are part of 70S ribosomes or polysomes). Required for efficient processing of 16S rRNA. May interact with the 5'-terminal helix region of 16S rRNA. In Synechocystis sp. (strain ATCC 27184 / PCC 6803 / Kazusa), this protein is Ribosome-binding factor A.